We begin with the raw amino-acid sequence, 255 residues long: tRNA (guanine-N(1)-)-methyltransferase (255 aa).

S-adenosyl-L-methionine is bound by residues G117 and I137–L142.

Belongs to the RNA methyltransferase TrmD family. As to quaternary structure, homodimer.

It is found in the cytoplasm. The enzyme catalyses guanosine(37) in tRNA + S-adenosyl-L-methionine = N(1)-methylguanosine(37) in tRNA + S-adenosyl-L-homocysteine + H(+). Functionally, specifically methylates guanosine-37 in various tRNAs. The protein is tRNA (guanine-N(1)-)-methyltransferase of Glaesserella parasuis serovar 5 (strain SH0165) (Haemophilus parasuis).